The primary structure comprises 399 residues: Glucose-1-phosphate adenylyltransferase (399 aa).

Alpha-D-glucose 1-phosphate-binding positions include Tyr-100, Gly-165, 180–181 (EK), and Ser-191.

The protein belongs to the bacterial/plant glucose-1-phosphate adenylyltransferase family. As to quaternary structure, homotetramer.

The enzyme catalyses alpha-D-glucose 1-phosphate + ATP + H(+) = ADP-alpha-D-glucose + diphosphate. The protein operates within glycan biosynthesis; glycogen biosynthesis. Functionally, involved in the biosynthesis of ADP-glucose, a building block required for the elongation reactions to produce glycogen. Catalyzes the reaction between ATP and alpha-D-glucose 1-phosphate (G1P) to produce pyrophosphate and ADP-Glc. This chain is Glucose-1-phosphate adenylyltransferase, found in Desulforamulus reducens (strain ATCC BAA-1160 / DSM 100696 / MI-1) (Desulfotomaculum reducens).